Consider the following 77-residue polypeptide: U8-lycotoxin-Ls1m (77 aa).

The signal sequence occupies residues 1-20; sequence MKLIIFTGLVLFSIVSLIEA. Positions 21–26 are excised as a propeptide; that stretch reads QAENEK.

It belongs to the neurotoxin 19 (CSTX) family. 08 (U8-Lctx) subfamily. In terms of processing, contains 4 disulfide bonds. Expressed by the venom gland.

It is found in the secreted. In Lycosa singoriensis (Wolf spider), this protein is U8-lycotoxin-Ls1m.